A 129-amino-acid polypeptide reads, in one-letter code: Histone H2B.1 (129 aa).

Residues 1–17 (MSAEKKPASKAPAEKKP) are compositionally biased toward basic and acidic residues. The interval 1–35 (MSAEKKPASKAPAEKKPAAKKTAPSADGKKRTKAR) is disordered. N6-acetyllysine; alternate is present on residues K5 and K6. Residues K5 and K6 each participate in a glycyl lysine isopeptide (Lys-Gly) (interchain with G-Cter in SUMO); alternate cross-link. Residue S9 is modified to Phosphoserine. N6-acetyllysine is present on K10. K15 is modified (N6-acetyllysine; alternate). K15 participates in a covalent cross-link: Glycyl lysine isopeptide (Lys-Gly) (interchain with G-Cter in SUMO); alternate. K16 participates in a covalent cross-link: Glycyl lysine isopeptide (Lys-Gly) (interchain with G-Cter in SUMO). K122 participates in a covalent cross-link: Glycyl lysine isopeptide (Lys-Gly) (interchain with G-Cter in ubiquitin).

It belongs to the histone H2B family. As to quaternary structure, the nucleosome is a histone octamer containing two molecules each of H2A, H2B, H3 and H4 assembled in one H3-H4 heterotetramer and two H2A-H2B heterodimers. The octamer wraps approximately 147 bp of DNA. Post-translationally, monoubiquitinated by the UBC2-BRE1 complex to form H2BK123ub1. H2BK123ub1 gives a specific tag for epigenetic transcriptional activation and is also prerequisite for H3K4me and H3K79me formation. H2BK123ub1 also modulates the formation of double-strand breaks during meiosis and is a prerequisite for DNA-damage checkpoint activation. Phosphorylated by STE20 to form H2BS10ph during progression through meiotic prophase. May be correlated with chromosome condensation. In terms of processing, acetylated by GCN5 to form H2BK11ac and H2BK16ac. H2BK16ac can also be formed by ESA1. Acetylation of N-terminal lysines and particularly formation of H2BK11acK16ac has a positive effect on transcription. Post-translationally, sumoylation to form H2BK6su or H2BK7su, and probably also H2BK16su or H2BK17su, occurs preferentially near the telomeres and represses gene transcription.

The protein resides in the nucleus. It is found in the chromosome. In terms of biological role, core component of nucleosome. Nucleosomes wrap and compact DNA into chromatin, limiting DNA accessibility to the cellular machineries which require DNA as a template. Histones thereby play a central role in transcription regulation, DNA repair, DNA replication and chromosomal stability. DNA accessibility is regulated via a complex set of post-translational modifications of histones, also called histone code, and nucleosome remodeling. The polypeptide is Histone H2B.1 (HTB1) (Candida glabrata (strain ATCC 2001 / BCRC 20586 / JCM 3761 / NBRC 0622 / NRRL Y-65 / CBS 138) (Yeast)).